The chain runs to 292 residues: Large ribosomal subunit protein bL19m (292 aa).

The segment at 41 to 60 (SRFQSTGPSEPGGFKPPPKP) is disordered. Phosphoserine is present on Ser77.

This sequence belongs to the bacterial ribosomal protein bL19 family. In terms of assembly, component of the mitochondrial ribosome large subunit (39S) which comprises a 16S rRNA and about 50 distinct proteins.

Its subcellular location is the mitochondrion. This Mus musculus (Mouse) protein is Large ribosomal subunit protein bL19m (Mrpl19).